Consider the following 620-residue polypeptide: Two-component response regulator ORR27 (620 aa).

Residues 24 to 138 (HVLVVDDDAA…AIKFIWKHVL (115 aa)) form the Response regulatory domain. Position 76 is a 4-aspartylphosphate (Asp-76). Disordered stretches follow at residues 171–197 (PPAV…AELS) and 215–257 (VWSS…LEAT). Residues 261–321 (KKVRTRFTWT…HLQKYRSWLE (61 aa)) constitute a DNA-binding region (myb-like GARP). Residues 431 to 456 (SVSRDAHENGNSQARGSAMSNGTSGT) show a composition bias toward polar residues. 3 disordered regions span residues 431–457 (SVSR…SGTR), 501–523 (SDQN…NSKT), and 596–620 (PPRG…SSGP). Over residues 603–620 (EIASHENTNGKNGASSGP) the composition is skewed to polar residues.

The protein belongs to the ARR family. Type-B subfamily. In terms of processing, two-component system major event consists of a His-to-Asp phosphorelay between a sensor histidine kinase (HK) and a response regulator (RR). In plants, the His-to-Asp phosphorelay involves an additional intermediate named Histidine-containing phosphotransfer protein (HPt). This multistep phosphorelay consists of a His-Asp-His-Asp sequential transfer of a phosphate group between first a His and an Asp of the HK protein, followed by the transfer to a conserved His of the HPt protein and finally the transfer to an Asp in the receiver domain of the RR protein.

The protein localises to the nucleus. Transcriptional activator that binds specific DNA sequence. Functions as a response regulator involved in His-to-Asp phosphorelay signal transduction system. Phosphorylation of the Asp residue in the receiver domain activates the ability of the protein to promote the transcription of target genes. May directly activate some type-A response regulators in response to cytokinins. The polypeptide is Two-component response regulator ORR27 (Oryza sativa subsp. japonica (Rice)).